The primary structure comprises 102 residues: Cytochrome c oxidase subunit 6a, mitochondrial (102 aa).

A mitochondrion-targeting transit peptide spans 1–36; sequence MATAIVRSALSRAVTRAAPKTSVAPKRNFSSSAGHD.

This sequence belongs to the cytochrome c oxidase subunit 6A (TC 3.D.4.11) family.

The protein resides in the mitochondrion inner membrane. Functionally, this protein is one of the nuclear-coded polypeptide chains of cytochrome c oxidase, the terminal oxidase in mitochondrial electron transport. In Arabidopsis thaliana (Mouse-ear cress), this protein is Cytochrome c oxidase subunit 6a, mitochondrial (COX6A).